The chain runs to 880 residues: Alanine--tRNA ligase (880 aa).

Positions 567, 571, 669, and 673 each coordinate Zn(2+).

This sequence belongs to the class-II aminoacyl-tRNA synthetase family. Requires Zn(2+) as cofactor.

It is found in the cytoplasm. It catalyses the reaction tRNA(Ala) + L-alanine + ATP = L-alanyl-tRNA(Ala) + AMP + diphosphate. In terms of biological role, catalyzes the attachment of alanine to tRNA(Ala) in a two-step reaction: alanine is first activated by ATP to form Ala-AMP and then transferred to the acceptor end of tRNA(Ala). Also edits incorrectly charged Ser-tRNA(Ala) and Gly-tRNA(Ala) via its editing domain. This Bacillus cytotoxicus (strain DSM 22905 / CIP 110041 / 391-98 / NVH 391-98) protein is Alanine--tRNA ligase.